The chain runs to 271 residues: MSRELIRTADAWNKVKIARDPNRPNAKFYINEIFDEFIELHGDRNFGDDKAIIGGIALLNNLSFTVIGICKGENTKENIKRNFGMPHPEGYRKALRLMKQAEKFKRPVICFVDTPGAFCGIGAEERGQGQAIAQNLVELMGLKVPVISIVIGEGGSGGALALAVADKVFMLEHSIYSVLSPEGFASILWKDSSRAEEAASVMKITAQDLKSFNIIDKIIKEPRGGAHKNPIKMAQNIKKTILEALGEMKGTDLDTLLNERYNKYRNIENNL.

The region spanning 1–247 (MSRELIRTAD…KKTILEALGE (247 aa)) is the CoA carboxyltransferase C-terminal domain.

Belongs to the AccA family. Acetyl-CoA carboxylase is a heterohexamer composed of biotin carboxyl carrier protein (AccB), biotin carboxylase (AccC) and two subunits each of ACCase subunit alpha (AccA) and ACCase subunit beta (AccD).

The protein resides in the cytoplasm. The catalysed reaction is N(6)-carboxybiotinyl-L-lysyl-[protein] + acetyl-CoA = N(6)-biotinyl-L-lysyl-[protein] + malonyl-CoA. It functions in the pathway lipid metabolism; malonyl-CoA biosynthesis; malonyl-CoA from acetyl-CoA: step 1/1. Functionally, component of the acetyl coenzyme A carboxylase (ACC) complex. First, biotin carboxylase catalyzes the carboxylation of biotin on its carrier protein (BCCP) and then the CO(2) group is transferred by the carboxyltransferase to acetyl-CoA to form malonyl-CoA. The sequence is that of Acetyl-coenzyme A carboxylase carboxyl transferase subunit alpha from Clostridium perfringens (strain ATCC 13124 / DSM 756 / JCM 1290 / NCIMB 6125 / NCTC 8237 / Type A).